Reading from the N-terminus, the 454-residue chain is Bifunctional protein GlmU (454 aa).

Residues 1–227 (MSKLSVVILA…MMEVEGANNR (227 aa)) are pyrophosphorylase. UDP-N-acetyl-alpha-D-glucosamine is bound by residues 9-12 (LAAG), K23, Q74, 79-80 (GT), 101-103 (YGD), G138, E152, N167, and N225. A Mg(2+)-binding site is contributed by D103. N225 contacts Mg(2+). The segment at 228-248 (LQLAALERYFQRKQATALLLA) is linker. The segment at 249 to 454 (GVSLADPERF…ADWERPSKKK (206 aa)) is N-acetyltransferase. Positions 331 and 349 each coordinate UDP-N-acetyl-alpha-D-glucosamine. H361 (proton acceptor) is an active-site residue. Y364 and N375 together coordinate UDP-N-acetyl-alpha-D-glucosamine. Acetyl-CoA contacts are provided by residues A378, 384-385 (NY), S403, A421, and R438.

It in the N-terminal section; belongs to the N-acetylglucosamine-1-phosphate uridyltransferase family. In the C-terminal section; belongs to the transferase hexapeptide repeat family. In terms of assembly, homotrimer. Mg(2+) is required as a cofactor.

Its subcellular location is the cytoplasm. The catalysed reaction is alpha-D-glucosamine 1-phosphate + acetyl-CoA = N-acetyl-alpha-D-glucosamine 1-phosphate + CoA + H(+). It catalyses the reaction N-acetyl-alpha-D-glucosamine 1-phosphate + UTP + H(+) = UDP-N-acetyl-alpha-D-glucosamine + diphosphate. The protein operates within nucleotide-sugar biosynthesis; UDP-N-acetyl-alpha-D-glucosamine biosynthesis; N-acetyl-alpha-D-glucosamine 1-phosphate from alpha-D-glucosamine 6-phosphate (route II): step 2/2. Its pathway is nucleotide-sugar biosynthesis; UDP-N-acetyl-alpha-D-glucosamine biosynthesis; UDP-N-acetyl-alpha-D-glucosamine from N-acetyl-alpha-D-glucosamine 1-phosphate: step 1/1. It functions in the pathway bacterial outer membrane biogenesis; LPS lipid A biosynthesis. Its function is as follows. Catalyzes the last two sequential reactions in the de novo biosynthetic pathway for UDP-N-acetylglucosamine (UDP-GlcNAc). The C-terminal domain catalyzes the transfer of acetyl group from acetyl coenzyme A to glucosamine-1-phosphate (GlcN-1-P) to produce N-acetylglucosamine-1-phosphate (GlcNAc-1-P), which is converted into UDP-GlcNAc by the transfer of uridine 5-monophosphate (from uridine 5-triphosphate), a reaction catalyzed by the N-terminal domain. The protein is Bifunctional protein GlmU of Actinobacillus succinogenes (strain ATCC 55618 / DSM 22257 / CCUG 43843 / 130Z).